A 388-amino-acid chain; its full sequence is MRYLTSGESHGPQLTVIVEGVPANLEVKVEDINREMFKRQGGYGRGRRMQIEKDTVEIVSGVRNGYTLGSPITMVVTNDDFTHWRKIMGAAPISDEERENMKRTITKPRPGHADLVGGMKYNHRDLRNVLERSSARETAARVAVGALCKVLLEQLDIEIYSRVVEIGGIKDKDFYDSETFKANLDRNDVRVIDDGIAQAMRDKIDEAKNDGDSIGGVVQVVVENMPVGVGSYVHYDRKLDGRIAQGVVSINAFKGVSFGEGFKAAEKPGSEIQDEILYNTELGYYRGSNHLGGLEGGMSNGMPIIVNGVMKPIPTLYKPLNSVDINTKEDFKATIERSDSCAVPAASIVCEHVVAFEIAKALLEEFQSNHIEQLKQQIIERRQLNIEF.

NADP(+) is bound by residues Arg39 and Arg45. FMN contacts are provided by residues 132–134 (RSS), 251–252 (NA), Gly296, 311–315 (KPIPT), and Arg337.

This sequence belongs to the chorismate synthase family. In terms of assembly, homotetramer. It depends on FMNH2 as a cofactor.

The catalysed reaction is 5-O-(1-carboxyvinyl)-3-phosphoshikimate = chorismate + phosphate. Its pathway is metabolic intermediate biosynthesis; chorismate biosynthesis; chorismate from D-erythrose 4-phosphate and phosphoenolpyruvate: step 7/7. Functionally, catalyzes the anti-1,4-elimination of the C-3 phosphate and the C-6 proR hydrogen from 5-enolpyruvylshikimate-3-phosphate (EPSP) to yield chorismate, which is the branch point compound that serves as the starting substrate for the three terminal pathways of aromatic amino acid biosynthesis. This reaction introduces a second double bond into the aromatic ring system. The sequence is that of Chorismate synthase from Staphylococcus aureus (strain bovine RF122 / ET3-1).